The chain runs to 581 residues: MKSHIQSLLIQALDALKQQGVIPTDFEARVQVDRTKDKTHGDFATNLAMMLTKVARKNPRELAQLIIDSLPQDSQVAKVEIAGPGFINFFIDENALASQLMAALNDDHLGIQLPEPQTVVVDYSSPNLAKEMHVGHLRSTIIGDSVVRALEFQGHNVIRQNHVGDWGTQFGMLLAYMEELRAENGEQAQMELSDLETFYRAAKVRFDESEDFAIRARKLVVSLQSGDEYCNKLWREFNDISLSHCHDVYERLGVSLTRKDVRGESTYNDDLEQVVKDLDAKGLLSESNGAKVVFQDEFKTKDGDPLPVIIQKADGGYLYATSDLAAMRYRSNVLKADRALYFVDLRQGLHFQQVFKLARTAEFINPDMSLEHMGFGTMNGDDGRPFKTRSGGVVKLVDLLTEADTRALELVRSKNPDMDQAELEKIAKVVGISSVKYADLSKNRASDYIFSFEQMLSFEGNTAPYLLYAYTRVAGIFKRATDIDLSDAKMQLDHDKEKDLGNKLAQFGEVLSRMVTKGQPHALCGYLFELAGAFSSFYEACPVLAAESEEQKKSRLLLSQLTAKTLKQGLDLLGIETLERM.

The 'HIGH' region motif lies at 126–136; the sequence is PNLAKEMHVGH.

The protein belongs to the class-I aminoacyl-tRNA synthetase family. As to quaternary structure, monomer.

It localises to the cytoplasm. It catalyses the reaction tRNA(Arg) + L-arginine + ATP = L-arginyl-tRNA(Arg) + AMP + diphosphate. The chain is Arginine--tRNA ligase from Shewanella sediminis (strain HAW-EB3).